The following is a 334-amino-acid chain: Nucleoid-associated protein SG1574 (334 aa).

It belongs to the YejK family.

It is found in the cytoplasm. Its subcellular location is the nucleoid. The chain is Nucleoid-associated protein SG1574 from Sodalis glossinidius (strain morsitans).